Consider the following 493-residue polypeptide: E3 ubiquitin-protein ligase TRIM35 (493 aa).

Met1 carries the post-translational modification N-acetylmethionine. Phosphoserine is present on residues Ser4 and Ser8. The RING-type zinc-finger motif lies at 21-61 (CAVCYDPFRDAVTLRCGHNFCRGCVSRCWEVQVSPTCPVCK). Residues 96-137 (RFSRVCRLHRGQLSLFCLEDKELLCCSCQADPRHQGHRVQPV) form a B box-type zinc finger. Zn(2+)-binding residues include Cys101, His104, Cys123, and His129. Residues 210–251 (AEETRQKQLLADEKMKQLTEETEVLAHEIERLQMEMKEDDVS) adopt a coiled-coil conformation. Positions 284-487 (LGSLQYRVWK…LRICPLHISV (204 aa)) constitute a B30.2/SPRY domain.

The protein belongs to the TRIM/RBCC family. As to quaternary structure, interacts with PKM isoform M2, but not isoform M1; this interaction may compete with that between PKM and FGFR1, and hence reduces FGFR1-dependent tyrosine phosphorylation of PKM. Interacts with IRF7; this interaction promotes IRF7 proteasomal degradation. Interacts with TRAF3; this interaction promotes TRAF3 activation.

The protein resides in the cytoplasm. Its subcellular location is the nucleus. The catalysed reaction is S-ubiquitinyl-[E2 ubiquitin-conjugating enzyme]-L-cysteine + [acceptor protein]-L-lysine = [E2 ubiquitin-conjugating enzyme]-L-cysteine + N(6)-ubiquitinyl-[acceptor protein]-L-lysine.. It participates in protein modification; protein ubiquitination. Its function is as follows. E3 ubiquitin-protein ligase that participates in multiple biological processes including cell death, glucose metabolism, and in particular, the innate immune response. Mediates 'Lys-63'-linked polyubiquitination of TRAF3 thereby promoting type I interferon production via RIG-I signaling pathway. Can also catalyze 'Lys-48'-linked polyubiquitination and proteasomal degradation of viral proteins such as influenza virus PB2. Acts as a negative feedback regulator of TLR7- and TLR9-triggered signaling. Mechanistically, promotes the 'Lys-48'-linked ubiquitination of IRF7 and induces its degradation via a proteasome-dependent pathway. Reduces FGFR1-dependent tyrosine phosphorylation of PKM, inhibiting PKM-dependent lactate production, glucose metabolism, and cell growth. This Homo sapiens (Human) protein is E3 ubiquitin-protein ligase TRIM35 (TRIM35).